The sequence spans 194 residues: Putative manganese efflux pump MntP (194 aa).

6 consecutive transmembrane segments (helical) span residues 6 to 26, 35 to 55, 66 to 86, 109 to 129, 142 to 162, and 174 to 194; these read LILV…GLAL, WLFA…GLYL, VAAI…LWEA, GVLG…LDAL, VPLT…LGLL, and RAEL…LVGV.

Belongs to the MntP (TC 9.B.29) family.

It is found in the cell membrane. In terms of biological role, probably functions as a manganese efflux pump. The polypeptide is Putative manganese efflux pump MntP (Moorella thermoacetica (strain ATCC 39073 / JCM 9320)).